The chain runs to 252 residues: 3-dehydroquinate dehydratase (252 aa).

3-dehydroquinate is bound by residues Ser-21, 46–48, and Arg-82; that span reads EWR. Residue His-143 is the Proton donor/acceptor of the active site. Lys-170 functions as the Schiff-base intermediate with substrate in the catalytic mechanism. 3-dehydroquinate is bound by residues Arg-213, Ser-232, and Gln-236.

The protein belongs to the type-I 3-dehydroquinase family. Homodimer.

It catalyses the reaction 3-dehydroquinate = 3-dehydroshikimate + H2O. The protein operates within metabolic intermediate biosynthesis; chorismate biosynthesis; chorismate from D-erythrose 4-phosphate and phosphoenolpyruvate: step 3/7. Involved in the third step of the chorismate pathway, which leads to the biosynthesis of aromatic amino acids. Catalyzes the cis-dehydration of 3-dehydroquinate (DHQ) and introduces the first double bond of the aromatic ring to yield 3-dehydroshikimate. This Escherichia coli (strain SE11) protein is 3-dehydroquinate dehydratase.